A 301-amino-acid polypeptide reads, in one-letter code: Enolase-phosphatase E1 (301 aa).

Residues D22 and E24 each coordinate Mg(2+). Substrate contacts are provided by residues 163 to 164 and K197; that span reads SS. D222 is a binding site for Mg(2+). A disordered region spans residues 273-301; sequence AQAGDTEAKRSASGDGALAAKKAPPTHDF.

Belongs to the HAD-like hydrolase superfamily. MasA/MtnC family. In terms of assembly, monomer. It depends on Mg(2+) as a cofactor.

Its subcellular location is the cytoplasm. It is found in the nucleus. It catalyses the reaction 5-methylsulfanyl-2,3-dioxopentyl phosphate + H2O = 1,2-dihydroxy-5-(methylsulfanyl)pent-1-en-3-one + phosphate. It participates in amino-acid biosynthesis; L-methionine biosynthesis via salvage pathway; L-methionine from S-methyl-5-thio-alpha-D-ribose 1-phosphate: step 3/6. It functions in the pathway amino-acid biosynthesis; L-methionine biosynthesis via salvage pathway; L-methionine from S-methyl-5-thio-alpha-D-ribose 1-phosphate: step 4/6. In terms of biological role, bifunctional enzyme that catalyzes the enolization of 2,3-diketo-5-methylthiopentyl-1-phosphate (DK-MTP-1-P) into the intermediate 2-hydroxy-3-keto-5-methylthiopentenyl-1-phosphate (HK-MTPenyl-1-P), which is then dephosphorylated to form the acireductone 1,2-dihydroxy-3-keto-5-methylthiopentene (DHK-MTPene). The chain is Enolase-phosphatase E1 from Monosiga brevicollis (Choanoflagellate).